Reading from the N-terminus, the 327-residue chain is Malate dehydrogenase (327 aa).

12–18 serves as a coordination point for NAD(+); it reads GAAGQIG. Substrate-binding residues include Arg-93 and Arg-99. Residues Asn-106, Gln-113, and 130 to 132 each bind NAD(+); that span reads VGN. Residues Asn-132 and Arg-163 each coordinate substrate. The active-site Proton acceptor is the His-188.

Belongs to the LDH/MDH superfamily. MDH type 2 family.

The catalysed reaction is (S)-malate + NAD(+) = oxaloacetate + NADH + H(+). Its function is as follows. Catalyzes the reversible oxidation of malate to oxaloacetate. The chain is Malate dehydrogenase from Cupriavidus necator (strain ATCC 17699 / DSM 428 / KCTC 22496 / NCIMB 10442 / H16 / Stanier 337) (Ralstonia eutropha).